Here is a 169-residue protein sequence, read N- to C-terminus: Succinate dehydrogenase cytochrome b560 subunit, mitochondrial (169 aa).

The transit peptide at 1 to 29 (MAALLLRHVGRHCLRAHLSPQLCIRNAVP) directs the protein to the mitochondrion. The Mitochondrial matrix portion of the chain corresponds to 30 to 62 (LGTTAKEEMERFWNKNLGSNRPLSPHITIYRWS). The chain crosses the membrane as a helical span at residues 63 to 92 (LPMAMSICHRGTGIALSAGVSLFGLSALLL). The Mitochondrial intermembrane segment spans residues 93–112 (PGNFESHLELVKSLCLGPTL). A helical transmembrane segment spans residues 113–137 (IYTAKFGIVFPLMYHTWNGIRHLIW). Residue histidine 127 participates in heme b binding. Residues 138–144 (DLGKGLT) lie on the Mitochondrial matrix side of the membrane. Residues 145-166 (IPQLTQSGVVVLILTVLSSVGL) form a helical membrane-spanning segment. Residues 167–169 (AAM) are Mitochondrial intermembrane-facing.

This sequence belongs to the cytochrome b560 family. In terms of assembly, component of complex II composed of four subunits: the flavoprotein (FP) SDHA, iron-sulfur protein (IP) SDHB, and a cytochrome b560 composed of SDHC and SDHD. Heme b serves as cofactor. Detected in heart muscle (at protein level).

Its subcellular location is the mitochondrion inner membrane. The protein operates within carbohydrate metabolism; tricarboxylic acid cycle. Membrane-anchoring subunit of succinate dehydrogenase (SDH) that is involved in complex II of the mitochondrial electron transport chain and is responsible for transferring electrons from succinate to ubiquinone (coenzyme Q). SDH also oxidizes malate to the non-canonical enol form of oxaloacetate, enol-oxaloacetate. Enol-oxaloacetate, which is a potent inhibitor of the succinate dehydrogenase activity, is further isomerized into keto-oxaloacetate. In Sus scrofa (Pig), this protein is Succinate dehydrogenase cytochrome b560 subunit, mitochondrial (SDHC).